We begin with the raw amino-acid sequence, 168 residues long: ATP synthase subunit b (168 aa).

A helical transmembrane segment spans residues 9 to 29 (AIPFGTIAYTLFIFLLLLVML).

This sequence belongs to the ATPase B chain family. In terms of assembly, F-type ATPases have 2 components, F(1) - the catalytic core - and F(0) - the membrane proton channel. F(1) has five subunits: alpha(3), beta(3), gamma(1), delta(1), epsilon(1). F(0) has three main subunits: a(1), b(2) and c(10-14). The alpha and beta chains form an alternating ring which encloses part of the gamma chain. F(1) is attached to F(0) by a central stalk formed by the gamma and epsilon chains, while a peripheral stalk is formed by the delta and b chains.

It localises to the cell membrane. Its function is as follows. F(1)F(0) ATP synthase produces ATP from ADP in the presence of a proton or sodium gradient. F-type ATPases consist of two structural domains, F(1) containing the extramembraneous catalytic core and F(0) containing the membrane proton channel, linked together by a central stalk and a peripheral stalk. During catalysis, ATP synthesis in the catalytic domain of F(1) is coupled via a rotary mechanism of the central stalk subunits to proton translocation. Component of the F(0) channel, it forms part of the peripheral stalk, linking F(1) to F(0). The chain is ATP synthase subunit b from Bacillus thuringiensis (strain Al Hakam).